The sequence spans 89 residues: Small ribosomal subunit protein uS17 (89 aa).

This sequence belongs to the universal ribosomal protein uS17 family. As to quaternary structure, part of the 30S ribosomal subunit.

One of the primary rRNA binding proteins, it binds specifically to the 5'-end of 16S ribosomal RNA. The chain is Small ribosomal subunit protein uS17 from Xylella fastidiosa (strain 9a5c).